Reading from the N-terminus, the 836-residue chain is General vesicular transport factor p115 (836 aa).

Positions 1–22 (MEFLKSGIKTVLGSTEPGQQPS) are disordered. Over residues 12–22 (LGSTEPGQQPS) the composition is skewed to polar residues. ARM repeat units follow at residues 24–64 (AETV…VGAQ), 65–124 (GMPP…IKTP), 126–166 (HVTL…LILV), 169–210 (MGVS…VAFE), 211–256 (NAFD…FKEG), 316–359 (RLLH…LGRV), 368–413 (PAIV…QTLL), 424–463 (STGQ…EELL), 477–518 (TLLE…KALL), 523–577 (TMAY…IIKR), and 579–636 (GQES…LVSG). 2 coiled-coil regions span residues 663–707 (IIRG…DQNT) and 744–806 (NMYF…EEAG). The tract at residues 803–836 (EEAGSTNTLPTSNVAPSVPAAGGGSPIPSGTASR) is disordered. Positions 806–816 (GSTNTLPTSNV) are enriched in polar residues. The segment covering 817 to 836 (APSVPAAGGGSPIPSGTASR) has biased composition (low complexity).

It belongs to the VDP/USO1/EDE1 family.

It localises to the cytoplasm. Its subcellular location is the golgi apparatus. The protein resides in the golgi stack. It is found in the golgi stack membrane. The protein localises to the endoplasmic reticulum. It localises to the endoplasmic reticulum membrane. In terms of biological role, essential for maintaining the architecture of the Golgi stacks and for normal organization of the transitional endoplasmic reticulum (tER). Required for both the formation of the Golgi stacks and the maintenance of the individual cisternae. The polypeptide is General vesicular transport factor p115 (Drosophila melanogaster (Fruit fly)).